The following is an 845-amino-acid chain: Beta-mannosidase B (845 aa).

E432 (proton donor) is an active-site residue. N717 and N723 each carry an N-linked (GlcNAc...) asparagine glycan.

Belongs to the glycosyl hydrolase 2 family. Beta-mannosidase B subfamily.

It carries out the reaction Hydrolysis of terminal, non-reducing beta-D-mannose residues in beta-D-mannosides.. It participates in glycan metabolism; N-glycan degradation. Exoglycosidase that cleaves the single beta-linked mannose residue from the non-reducing end of beta-mannosidic oligosaccharides of various complexity and length. Prefers mannobiose over mannotriose and has no activity against polymeric mannan. Is also severely restricted by galactosyl substitutions at the +1 subsite. This chain is Beta-mannosidase B (mndB), found in Aspergillus clavatus (strain ATCC 1007 / CBS 513.65 / DSM 816 / NCTC 3887 / NRRL 1 / QM 1276 / 107).